Consider the following 498-residue polypeptide: Probable malate:quinone oxidoreductase (498 aa).

The protein belongs to the MQO family. It depends on FAD as a cofactor.

The catalysed reaction is (S)-malate + a quinone = a quinol + oxaloacetate. It functions in the pathway carbohydrate metabolism; tricarboxylic acid cycle; oxaloacetate from (S)-malate (quinone route): step 1/1. The sequence is that of Probable malate:quinone oxidoreductase from Prochlorococcus marinus (strain AS9601).